Consider the following 758-residue polypeptide: 5-methyltetrahydropteroyltriglutamate--homocysteine methyltransferase (758 aa).

5-methyltetrahydropteroyltri-L-glutamate-binding positions include 17 to 20 (RELK) and K117. L-homocysteine contacts are provided by residues 434-436 (IGS) and E487. Residues 434-436 (IGS) and E487 each bind L-methionine. 5-methyltetrahydropteroyltri-L-glutamate-binding positions include 518–519 (RC) and W564. D602 provides a ligand contact to L-homocysteine. D602 contacts L-methionine. E608 serves as a coordination point for 5-methyltetrahydropteroyltri-L-glutamate. H644, C646, and E668 together coordinate Zn(2+). Residue H697 is the Proton donor of the active site. Residue C729 participates in Zn(2+) binding.

Belongs to the vitamin-B12 independent methionine synthase family. The cofactor is Zn(2+).

It carries out the reaction 5-methyltetrahydropteroyltri-L-glutamate + L-homocysteine = tetrahydropteroyltri-L-glutamate + L-methionine. It participates in amino-acid biosynthesis; L-methionine biosynthesis via de novo pathway; L-methionine from L-homocysteine (MetE route): step 1/1. Its function is as follows. Catalyzes the transfer of a methyl group from 5-methyltetrahydrofolate to homocysteine resulting in methionine formation. The sequence is that of 5-methyltetrahydropteroyltriglutamate--homocysteine methyltransferase from Yersinia pestis (strain Pestoides F).